The primary structure comprises 236 residues: Small ribosomal subunit protein uS5 (236 aa).

Over residues 1–10 (MTENNEKDIQ) the composition is skewed to basic and acidic residues. The segment at 1 to 64 (MTENNEKDIQ…GRDGGREAEK (64 aa)) is disordered. The span at 11–27 (VTEAVAAPATETAAPAT) shows a compositional bias: low complexity. Positions 28 to 64 (TDDRRGGARRGERGDRGQGRGDRGGRGGRDGGREAEK) are enriched in basic and acidic residues. One can recognise an S5 DRBM domain in the interval 67–130 (FVERVVTINR…EEAKKSFFRV (64 aa)).

The protein belongs to the universal ribosomal protein uS5 family. In terms of assembly, part of the 30S ribosomal subunit. Contacts proteins S4 and S8.

Functionally, with S4 and S12 plays an important role in translational accuracy. Located at the back of the 30S subunit body where it stabilizes the conformation of the head with respect to the body. The protein is Small ribosomal subunit protein uS5 of Arthrobacter sp. (strain FB24).